We begin with the raw amino-acid sequence, 253 residues long: Transcription factor ORG2 (253 aa).

In terms of domain architecture, bHLH spans 71-123; the sequence is VKKLNHNASERDRRKKINTLFSSLRSCLPASDQSKKLSIPETVSKSLKYIPEL.

Homodimer. In terms of tissue distribution, roots.

The protein resides in the nucleus. The sequence is that of Transcription factor ORG2 (ORG2) from Arabidopsis thaliana (Mouse-ear cress).